A 340-amino-acid chain; its full sequence is Tetraacyldisaccharide 4'-kinase (340 aa).

Residue 51 to 58 (HMGGAGKT) coordinates ATP.

It belongs to the LpxK family.

It catalyses the reaction a lipid A disaccharide + ATP = a lipid IVA + ADP + H(+). It participates in glycolipid biosynthesis; lipid IV(A) biosynthesis; lipid IV(A) from (3R)-3-hydroxytetradecanoyl-[acyl-carrier-protein] and UDP-N-acetyl-alpha-D-glucosamine: step 6/6. Functionally, transfers the gamma-phosphate of ATP to the 4'-position of a tetraacyldisaccharide 1-phosphate intermediate (termed DS-1-P) to form tetraacyldisaccharide 1,4'-bis-phosphate (lipid IVA). In Rhodopseudomonas palustris (strain TIE-1), this protein is Tetraacyldisaccharide 4'-kinase.